Reading from the N-terminus, the 118-residue chain is MTAFRLVAVALVVVVACSTTWARSLEGSSSPVASLIRGRSLSKRANFDPSCAGVYNRELLGRLSRLCDDCYNVFREPKVATECRSNCFYNPVFVQCLEYLIPADLHEEYQAHVQTVGK.

A signal peptide spans 1–22 (MTAFRLVAVALVVVVACSTTWA). 3 cysteine pairs are disulfide-bonded: Cys51–Cys87, Cys67–Cys83, and Cys70–Cys96. Position 116 is a valine amide (Val116).

It belongs to the arthropod CHH/MIH/GIH/VIH hormone family.

Its subcellular location is the secreted. Its function is as follows. Hormone found in the sinus gland of isopods and decapods which controls the blood sugar level. Has a secretagogue action over the amylase released from the midgut gland. May act as a stress hormone and may be involved in the control of molting and reproduction. The polypeptide is Crustacean hyperglycemic hormones 2 (CHH2) (Penaeus monodon (Giant tiger prawn)).